Here is a 365-residue protein sequence, read N- to C-terminus: Endophilin-B1 (365 aa).

Met-1 bears the N-acetylmethionine mark. Residues Met-1–Leu-30 are membrane-binding amphipathic helix. The tract at residues Met-1 to Glu-37 is required for membrane binding. The BAR domain maps to Glu-27–Ser-261. Residue Thr-145 is modified to Phosphothreonine; by CDK5. Residues Tyr-155 to Leu-195 adopt a coiled-coil conformation. The 61-residue stretch at Gly-305–Asn-365 folds into the SH3 domain.

Belongs to the endophilin family. In terms of assembly, homodimer, and heterodimer with SH3GLB2. Binds BAX; induction of apoptosis augments BAX binding. Binds DNM1, HTT, AMPH, BIN1 and ARFGAP1. Interacts with UVRAG; UVRAG bridges the interaction to BECN1 indicative for an association with the PI3K complex II (PI3KC3-C2). In terms of processing, phosphorylated at Thr-145 by CDK5; this phosphorylation is required for autophagy induction in starved neurons and facilitates homodimerization.

The protein resides in the cytoplasm. Its subcellular location is the golgi apparatus membrane. It is found in the mitochondrion outer membrane. It localises to the cytoplasmic vesicle. The protein localises to the autophagosome membrane. The protein resides in the midbody. May be required for normal outer mitochondrial membrane dynamics. Required for coatomer-mediated retrograde transport in certain cells. May recruit other proteins to membranes with high curvature. May promote membrane fusion. Involved in activation of caspase-dependent apoptosis by promoting BAX/BAK1 activation. Involved in caspase-independent apoptosis during nutrition starvation and involved in the regulation of autophagy. Activates lipid kinase activity of PIK3C3 during autophagy probably by associating with the PI3K complex II (PI3KC3-C2). Associated with PI3KC3-C2 during autophagy may regulate the trafficking of ATG9A from the Golgi complex to the peripheral cytoplasm for the formation of autophagosomes by inducing Golgi membrane tubulation and fragmentation. Involved in regulation of degradative endocytic trafficking and cytokinesis, probably in the context of PI3KC3-C2. The sequence is that of Endophilin-B1 (SH3GLB1) from Bos taurus (Bovine).